The primary structure comprises 213 residues: Uridine kinase (213 aa).

An ATP-binding site is contributed by 15-22; it reads GASASGKS.

This sequence belongs to the uridine kinase family.

The protein resides in the cytoplasm. The enzyme catalyses uridine + ATP = UMP + ADP + H(+). It carries out the reaction cytidine + ATP = CMP + ADP + H(+). Its pathway is pyrimidine metabolism; CTP biosynthesis via salvage pathway; CTP from cytidine: step 1/3. The protein operates within pyrimidine metabolism; UMP biosynthesis via salvage pathway; UMP from uridine: step 1/1. This chain is Uridine kinase, found in Yersinia enterocolitica serotype O:8 / biotype 1B (strain NCTC 13174 / 8081).